Here is a 78-residue protein sequence, read N- to C-terminus: Small ribosomal subunit protein bS18 (78 aa).

It belongs to the bacterial ribosomal protein bS18 family. Part of the 30S ribosomal subunit. Forms a tight heterodimer with protein bS6.

In terms of biological role, binds as a heterodimer with protein bS6 to the central domain of the 16S rRNA, where it helps stabilize the platform of the 30S subunit. The sequence is that of Small ribosomal subunit protein bS18 from Parafrankia sp. (strain EAN1pec).